The following is a 470-amino-acid chain: MEFFPIFLKLRHQRCLLVGGGEVALRKARLLLAAGASLQVVAPELAPELADLAERGELEHLPGRYAPALLDGMRLAVAATDDAEVNRAVAADAEARGILVNVVDDAEASRYISPAIIDRSPLMVAVASGGSVPVLARSIRARLESLIPAGYGRLARFGSSFRDAVKARFPDVDARRRFWETVLEGPLADAVMNGDEAAARAEMEKRIAAGGADRAGAVYLVGAGPGNPDLLTFRALRLMQQADVVLYDKLVAPELLELVRRDAERVYVGKARANHALPQDDINQLLVDLARQGKRVLRLKGGDPFTFGRGGEEIATLAEHGIAFEVVPGITSASGAAAYAGIPLTHRDYAQSVTFVTGHKQDGSIDLDWQALTRPQQTVVVYMGVSTAAELCQAFVDNGRAASTPAAAVEWATTERQRTVCGTLAALPGLMASHGIASPALIIVGEVVELADKLSWYRRSENSAVTIQED.

The precorrin-2 dehydrogenase /sirohydrochlorin ferrochelatase stretch occupies residues 1-203 (MEFFPIFLKL…GDEAAARAEM (203 aa)). Residues 22–23 (EV) and 43–44 (PE) contribute to the NAD(+) site. At serine 128 the chain carries Phosphoserine. The uroporphyrinogen-III C-methyltransferase stretch occupies residues 216 to 470 (GAVYLVGAGP…ENSAVTIQED (255 aa)). Residue proline 225 coordinates S-adenosyl-L-methionine. The Proton acceptor role is filled by aspartate 248. Residue lysine 270 is the Proton donor of the active site. S-adenosyl-L-methionine-binding positions include 301 to 303 (GGD), methionine 383, and alanine 412.

This sequence in the N-terminal section; belongs to the precorrin-2 dehydrogenase / sirohydrochlorin ferrochelatase family. In the C-terminal section; belongs to the precorrin methyltransferase family.

The catalysed reaction is uroporphyrinogen III + 2 S-adenosyl-L-methionine = precorrin-2 + 2 S-adenosyl-L-homocysteine + H(+). It catalyses the reaction precorrin-2 + NAD(+) = sirohydrochlorin + NADH + 2 H(+). It carries out the reaction siroheme + 2 H(+) = sirohydrochlorin + Fe(2+). It participates in cofactor biosynthesis; adenosylcobalamin biosynthesis; precorrin-2 from uroporphyrinogen III: step 1/1. The protein operates within cofactor biosynthesis; adenosylcobalamin biosynthesis; sirohydrochlorin from precorrin-2: step 1/1. It functions in the pathway porphyrin-containing compound metabolism; siroheme biosynthesis; precorrin-2 from uroporphyrinogen III: step 1/1. Its pathway is porphyrin-containing compound metabolism; siroheme biosynthesis; siroheme from sirohydrochlorin: step 1/1. It participates in porphyrin-containing compound metabolism; siroheme biosynthesis; sirohydrochlorin from precorrin-2: step 1/1. Its function is as follows. Multifunctional enzyme that catalyzes the SAM-dependent methylations of uroporphyrinogen III at position C-2 and C-7 to form precorrin-2 via precorrin-1. Then it catalyzes the NAD-dependent ring dehydrogenation of precorrin-2 to yield sirohydrochlorin. Finally, it catalyzes the ferrochelation of sirohydrochlorin to yield siroheme. This is Siroheme synthase from Chromobacterium violaceum (strain ATCC 12472 / DSM 30191 / JCM 1249 / CCUG 213 / NBRC 12614 / NCIMB 9131 / NCTC 9757 / MK).